A 399-amino-acid polypeptide reads, in one-letter code: RNA-binding protein cabeza (399 aa).

Gly residues predominate over residues Met-1–Gln-12. Residues Met-1–Gly-82 are disordered. Positions Tyr-24–Tyr-34 are enriched in polar residues. Over residues Lys-43–Ser-69 the composition is skewed to gly residues. An RRM domain is found at Asp-120–Arg-206. 2 disordered regions span residues Asn-209 to Asp-276 and Thr-300 to Tyr-399. The span at Lys-212 to Asn-271 shows a compositional bias: gly residues. The RanBP2-type zinc-finger motif lies at Arg-275–Asp-304. 3 stretches are compositionally biased toward gly residues: residues Ser-308–Tyr-339, Asn-347–Tyr-361, and Asn-368–Gly-380. Over residues Pro-387–Tyr-399 the composition is skewed to low complexity.

The protein belongs to the RRM TET family. Ubiquitous. Enriched in the brain and central nervous system during embryogenesis. Enriched in the adult head. Embryos contain both isoforms A and B, whereas later in development (heads and torsos) only isoform B is detected.

It localises to the nucleus. May participate in a function common to the expression of most genes transcribed by RNA polymerase II. The protein is RNA-binding protein cabeza (caz) of Drosophila melanogaster (Fruit fly).